The chain runs to 382 residues: Mannitol-1-phosphate 5-dehydrogenase (382 aa).

3–14 lines the NAD(+) pocket; it reads ALHFGAGNIGRG. K269 carries the post-translational modification N6-acetyllysine.

Belongs to the mannitol dehydrogenase family.

The catalysed reaction is D-mannitol 1-phosphate + NAD(+) = beta-D-fructose 6-phosphate + NADH + H(+). In Escherichia coli O127:H6 (strain E2348/69 / EPEC), this protein is Mannitol-1-phosphate 5-dehydrogenase.